Here is a 72-residue protein sequence, read N- to C-terminus: Small ribosomal subunit protein bS18 (72 aa).

It belongs to the bacterial ribosomal protein bS18 family. As to quaternary structure, part of the 30S ribosomal subunit. Forms a tight heterodimer with protein bS6.

In terms of biological role, binds as a heterodimer with protein bS6 to the central domain of the 16S rRNA, where it helps stabilize the platform of the 30S subunit. The chain is Small ribosomal subunit protein bS18 from Francisella tularensis subsp. holarctica (strain FTNF002-00 / FTA).